A 312-amino-acid chain; its full sequence is Taste receptor type 2 member 9 (312 aa).

The Extracellular portion of the chain corresponds to 1 to 9 (MPSAIEAIY). A helical membrane pass occupies residues 10-32 (IILIAGELTIGIWGNGFIVLVNC). Over 33–52 (XDWLKRRDISLIDIILISLA) the chain is Cytoplasmic. Residues 53 to 72 (ISRICLLCVISLDGFFMLLF) traverse the membrane as a helical segment. The Extracellular portion of the chain corresponds to 73–86 (PGTYGNSVLVSIVN). A helical membrane pass occupies residues 87-109 (VVWTFANNSSLWFTSCLSIFYLL). Topologically, residues 110-128 (KIANISHPFFFWLKLKINK) are cytoplasmic. The chain crosses the membrane as a helical span at residues 129 to 146 (VMLAILLGSFLISLIISV). The Extracellular segment spans residues 147-180 (XKNDDMWYHLFKVSXEENITWEFKVSKIPGTFKQ). Asn164 carries N-linked (GlcNAc...) asparagine glycosylation. The helical transmembrane segment at 181–203 (LTLNLGGRVPFILCLISFFLLLF) threads the bilayer. The Cytoplasmic segment spans residues 204-234 (SLVRHTKQIQLHATGFRDPSTEAHMRAIKAV). A helical transmembrane segment spans residues 235-257 (IIFLLLLIVYYPVFLVMTSSALI). The Extracellular portion of the chain corresponds to 258–261 (PQGK). A helical transmembrane segment spans residues 262–284 (LVLMIGDIVTVIFPSSHSFILIM). Over 285-312 (GNSKLREAFLKMLRFVKGFLRRRKPFVP) the chain is Cytoplasmic.

This sequence belongs to the G-protein coupled receptor T2R family.

The protein localises to the membrane. Gustducin-coupled receptor implicated in the perception of bitter compounds in the oral cavity and the gastrointestinal tract. Signals through PLCB2 and the calcium-regulated cation channel TRPM5. The sequence is that of Taste receptor type 2 member 9 (TAS2R9) from Pan troglodytes (Chimpanzee).